The chain runs to 238 residues: ATP-dependent dethiobiotin synthetase BioD (238 aa).

An ATP-binding site is contributed by 12 to 17 (EVGKTV). Residue Thr16 coordinates Mg(2+). The active site involves Lys37. Thr41 serves as a coordination point for substrate. ATP contacts are provided by residues Asp50, 109 to 112 (EGAG), 170 to 171 (GS), and 200 to 202 (PAG). 2 residues coordinate Mg(2+): Asp50 and Glu109.

The protein belongs to the dethiobiotin synthetase family. As to quaternary structure, homodimer. Requires Mg(2+) as cofactor.

The protein resides in the cytoplasm. The enzyme catalyses (7R,8S)-7,8-diammoniononanoate + CO2 + ATP = (4R,5S)-dethiobiotin + ADP + phosphate + 3 H(+). Its pathway is cofactor biosynthesis; biotin biosynthesis; biotin from 7,8-diaminononanoate: step 1/2. In terms of biological role, catalyzes a mechanistically unusual reaction, the ATP-dependent insertion of CO2 between the N7 and N8 nitrogen atoms of 7,8-diaminopelargonic acid (DAPA, also called 7,8-diammoniononanoate) to form a ureido ring. The protein is ATP-dependent dethiobiotin synthetase BioD of Parafrankia sp. (strain EAN1pec).